A 942-amino-acid polypeptide reads, in one-letter code: UvrABC system protein A (942 aa).

ATP is bound at residue 32–39 (GLSGSGKS). The segment at 251–278 (CPVCGFTVPELEPRLFSFNAPFGSCPTC) adopts a C4-type zinc-finger fold. ABC transporter domains follow at residues 308–589 (WNPI…KKSI) and 609–937 (GNGR…HYLK). 641-648 (GVSGSGKS) contacts ATP. The C4-type zinc finger occupies 740-766 (CEACSGDGIIKIEMHFLPDVYVPCEVC).

It belongs to the ABC transporter superfamily. UvrA family. In terms of assembly, forms a heterotetramer with UvrB during the search for lesions.

Its subcellular location is the cytoplasm. The UvrABC repair system catalyzes the recognition and processing of DNA lesions. UvrA is an ATPase and a DNA-binding protein. A damage recognition complex composed of 2 UvrA and 2 UvrB subunits scans DNA for abnormalities. When the presence of a lesion has been verified by UvrB, the UvrA molecules dissociate. The polypeptide is UvrABC system protein A (Streptococcus pyogenes serotype M3 (strain ATCC BAA-595 / MGAS315)).